A 140-amino-acid polypeptide reads, in one-letter code: Small ribosomal subunit protein uS12 (140 aa).

D102 carries the 3-methylthioaspartic acid modification.

The protein belongs to the universal ribosomal protein uS12 family. As to quaternary structure, part of the 30S ribosomal subunit. Contacts proteins S8 and S17. May interact with IF1 in the 30S initiation complex.

In terms of biological role, with S4 and S5 plays an important role in translational accuracy. Its function is as follows. Interacts with and stabilizes bases of the 16S rRNA that are involved in tRNA selection in the A site and with the mRNA backbone. Located at the interface of the 30S and 50S subunits, it traverses the body of the 30S subunit contacting proteins on the other side and probably holding the rRNA structure together. The combined cluster of proteins S8, S12 and S17 appears to hold together the shoulder and platform of the 30S subunit. The polypeptide is Small ribosomal subunit protein uS12 (Bacillus cereus (strain G9842)).